A 310-amino-acid polypeptide reads, in one-letter code: MAQKPVDYVTQIIGNTPVVKLRNVVDDDAADIYVKLEYQNPGGSVKDRIALAMIEKAEREGKIKPGDTIVEPTSGNTGIGLAFVCAAKGYKAVFTMPETMSQERRNLLKAYGAELVLTPGSEAMKGAIKKAKELKEEHGYFEPQQFENPANPEIHELTTGPELVEQFEGRQIDAFLAGVGTGGTLSGVGKVLKKEYPNVEIVAIEPEASPVLSGGEPGPHKLQGLGAGFVPDTLNTEVYDSIIKVGNDTAMDMARRVAREEGILAGISSGAAIYAAIQKAKELGKGKTVVTVLPSNGERYLSTPLYSFDN.

Lysine 46 is subject to N6-(pyridoxal phosphate)lysine. Pyridoxal 5'-phosphate is bound by residues asparagine 76, 180-184 (GTGGT), and serine 268.

The protein belongs to the cysteine synthase/cystathionine beta-synthase family. In terms of assembly, homodimer. The cofactor is pyridoxal 5'-phosphate.

The catalysed reaction is O-acetyl-L-serine + hydrogen sulfide = L-cysteine + acetate. It participates in amino-acid biosynthesis; L-cysteine biosynthesis; L-cysteine from L-serine: step 2/2. This chain is Cysteine synthase (cysK), found in Staphylococcus epidermidis (strain ATCC 35984 / DSM 28319 / BCRC 17069 / CCUG 31568 / BM 3577 / RP62A).